A 365-amino-acid polypeptide reads, in one-letter code: Outer capsid protein sigma-3 (365 aa).

The segment at 51–73 (CMHCLGVVGSLQRKLKHLPHHKC) adopts a CCHC-type zinc-finger fold.

This sequence belongs to the orthoreovirus sigma-3 protein family. Heterohexamer of three sigma-3 and three Mu-1 proteins. The RNA-binding form is probably a homodimer. Post-translationally, cleaved during virus the endosomal proteolytic disassembly of the outer capsid.

The protein resides in the virion. The protein localises to the host cytoplasm. Its subcellular location is the host nucleus. Its function is as follows. Stimulates translation by blocking the activation of the dsRNA-dependent protein kinase EIF2AK2/PKR, thereby inhibiting the host interferon response. Sigma3 prevents the activation of EIF2AK2 by competing with the kinase for dsRNA-binding. Functionally, the viral outer shell polypeptides, of which sigma-3 is one, impose structural constraints that prevent elongation of nascent transcripts by the RNA-dependent RNA polymerase lambda-3. This Mammalia (T2J) protein is Outer capsid protein sigma-3 (S4).